A 718-amino-acid chain; its full sequence is Polyribonucleotide nucleotidyltransferase (718 aa).

Mg(2+) is bound by residues aspartate 496 and aspartate 502. In terms of domain architecture, KH spans 563–622 (PRLLTIKIDSDMIGLVIGPGGKTIKGITEETGAKIDIEDDGTVTISAVDENKAKRARNII). Positions 632-700 (GDVYAGRITR…NKGRINLTRL (69 aa)) constitute an S1 motif domain.

It belongs to the polyribonucleotide nucleotidyltransferase family. The cofactor is Mg(2+).

The protein resides in the cytoplasm. It catalyses the reaction RNA(n+1) + phosphate = RNA(n) + a ribonucleoside 5'-diphosphate. Functionally, involved in mRNA degradation. Catalyzes the phosphorolysis of single-stranded polyribonucleotides processively in the 3'- to 5'-direction. This is Polyribonucleotide nucleotidyltransferase from Nostoc punctiforme (strain ATCC 29133 / PCC 73102).